A 1465-amino-acid polypeptide reads, in one-letter code: DNA polymerase III PolC-type (1465 aa).

The 157-residue stretch at 427-583 (YVVFDVETTG…YDAEATGRLL (157 aa)) folds into the Exonuclease domain.

This sequence belongs to the DNA polymerase type-C family. PolC subfamily.

It localises to the cytoplasm. The catalysed reaction is DNA(n) + a 2'-deoxyribonucleoside 5'-triphosphate = DNA(n+1) + diphosphate. Functionally, required for replicative DNA synthesis. This DNA polymerase also exhibits 3' to 5' exonuclease activity. The protein is DNA polymerase III PolC-type of Streptococcus pyogenes serotype M1.